A 175-amino-acid polypeptide reads, in one-letter code: NADH-quinone oxidoreductase subunit I (175 aa).

2 4Fe-4S ferredoxin-type domains span residues 69 to 98 (KRDE…IEAA) and 115 to 144 (KKFE…LDGP). Residues cysteine 78, cysteine 81, cysteine 84, cysteine 88, cysteine 124, cysteine 127, cysteine 130, and cysteine 134 each coordinate [4Fe-4S] cluster.

Belongs to the complex I 23 kDa subunit family. NDH-1 is composed of 14 different subunits. Subunits NuoA, H, J, K, L, M, N constitute the membrane sector of the complex. Requires [4Fe-4S] cluster as cofactor.

Its subcellular location is the cell inner membrane. The catalysed reaction is a quinone + NADH + 5 H(+)(in) = a quinol + NAD(+) + 4 H(+)(out). Its function is as follows. NDH-1 shuttles electrons from NADH, via FMN and iron-sulfur (Fe-S) centers, to quinones in the respiratory chain. The immediate electron acceptor for the enzyme in this species is believed to be ubiquinone. Couples the redox reaction to proton translocation (for every two electrons transferred, four hydrogen ions are translocated across the cytoplasmic membrane), and thus conserves the redox energy in a proton gradient. This Leptospira interrogans serogroup Icterohaemorrhagiae serovar Lai (strain 56601) protein is NADH-quinone oxidoreductase subunit I.